We begin with the raw amino-acid sequence, 179 residues long: Large ribosomal subunit protein uL5 (179 aa).

Belongs to the universal ribosomal protein uL5 family. In terms of assembly, part of the 50S ribosomal subunit; part of the 5S rRNA/L5/L18/L25 subcomplex. Contacts the 5S rRNA and the P site tRNA. Forms a bridge to the 30S subunit in the 70S ribosome.

Functionally, this is one of the proteins that bind and probably mediate the attachment of the 5S RNA into the large ribosomal subunit, where it forms part of the central protuberance. In the 70S ribosome it contacts protein S13 of the 30S subunit (bridge B1b), connecting the 2 subunits; this bridge is implicated in subunit movement. Contacts the P site tRNA; the 5S rRNA and some of its associated proteins might help stabilize positioning of ribosome-bound tRNAs. The sequence is that of Large ribosomal subunit protein uL5 from Delftia acidovorans (strain DSM 14801 / SPH-1).